Consider the following 641-residue polypeptide: Calpain-6 (641 aa).

The region spanning Leu26 to Val343 is the Calpain catalytic domain. The tract at residues Asn344–Arg495 is domain III. The C2 domain maps to Thr498 to Ala621.

It belongs to the peptidase C2 family. As to quaternary structure, interacts (via domain III) with microtubules. Interacts (via domain II) with ARHGEF2 (via the N-terminal zinc finger). In terms of tissue distribution, expressed only in placenta.

The protein resides in the cytoplasm. It is found in the perinuclear region. It localises to the cytoskeleton. The protein localises to the spindle. Its function is as follows. Microtubule-stabilizing protein that may be involved in the regulation of microtubule dynamics and cytoskeletal organization. May act as a regulator of RAC1 activity through interaction with ARHGEF2 to control lamellipodial formation and cell mobility. Does not seem to have protease activity as it has lost the active site residues. This is Calpain-6 (CAPN6) from Homo sapiens (Human).